Reading from the N-terminus, the 152-residue chain is MEKKLSSEKNQLSSEHILGLLPHRYPFALVDKVIENIPGERAVAVKNVTLNEPQFQGHFPERPLMPGVLIVESMAQVGGIIVTQMPDLPKGLFVFAGINNVKFRKPVVPGDQLIISCELLSIKRQRFGKVKGEAYVDGNLVCAGELMFSLVD.

H58 is an active-site residue.

It belongs to the thioester dehydratase family. FabZ subfamily.

The protein localises to the cytoplasm. It catalyses the reaction a (3R)-hydroxyacyl-[ACP] = a (2E)-enoyl-[ACP] + H2O. Functionally, involved in unsaturated fatty acids biosynthesis. Catalyzes the dehydration of short chain beta-hydroxyacyl-ACPs and long chain saturated and unsaturated beta-hydroxyacyl-ACPs. This Prochlorococcus marinus (strain MIT 9301) protein is 3-hydroxyacyl-[acyl-carrier-protein] dehydratase FabZ.